A 306-amino-acid polypeptide reads, in one-letter code: Ribonuclease Z (306 aa).

Residues H63, H65, D67, H68, H141, D211, and H269 each contribute to the Zn(2+) site. D67 functions as the Proton acceptor in the catalytic mechanism.

The protein belongs to the RNase Z family. In terms of assembly, homodimer. The cofactor is Zn(2+).

The enzyme catalyses Endonucleolytic cleavage of RNA, removing extra 3' nucleotides from tRNA precursor, generating 3' termini of tRNAs. A 3'-hydroxy group is left at the tRNA terminus and a 5'-phosphoryl group is left at the trailer molecule.. Zinc phosphodiesterase, which displays some tRNA 3'-processing endonuclease activity. Probably involved in tRNA maturation, by removing a 3'-trailer from precursor tRNA. The chain is Ribonuclease Z from Staphylococcus aureus (strain USA300).